A 204-amino-acid polypeptide reads, in one-letter code: Holliday junction branch migration complex subunit RuvA (204 aa).

The segment at 1–64 (MIGRLRGTLI…EDAQLLYGFN (64 aa)) is domain I. The segment at 65–143 (TVSERALFRE…GWGAGDLFTP (79 aa)) is domain II. A flexible linker region spans residues 144 to 155 (ATDAAPVDSTPV). The tract at residues 156–204 (IAQNAQEEAMSALLALGYKPPQASKAVSQVAKAGMSSEELIREALKSMV) is domain III.

It belongs to the RuvA family. As to quaternary structure, homotetramer. Forms an RuvA(8)-RuvB(12)-Holliday junction (HJ) complex. HJ DNA is sandwiched between 2 RuvA tetramers; dsDNA enters through RuvA and exits via RuvB. An RuvB hexamer assembles on each DNA strand where it exits the tetramer. Each RuvB hexamer is contacted by two RuvA subunits (via domain III) on 2 adjacent RuvB subunits; this complex drives branch migration. In the full resolvosome a probable DNA-RuvA(4)-RuvB(12)-RuvC(2) complex forms which resolves the HJ.

It is found in the cytoplasm. Functionally, the RuvA-RuvB-RuvC complex processes Holliday junction (HJ) DNA during genetic recombination and DNA repair, while the RuvA-RuvB complex plays an important role in the rescue of blocked DNA replication forks via replication fork reversal (RFR). RuvA specifically binds to HJ cruciform DNA, conferring on it an open structure. The RuvB hexamer acts as an ATP-dependent pump, pulling dsDNA into and through the RuvAB complex. HJ branch migration allows RuvC to scan DNA until it finds its consensus sequence, where it cleaves and resolves the cruciform DNA. This Vibrio cholerae serotype O1 (strain ATCC 39541 / Classical Ogawa 395 / O395) protein is Holliday junction branch migration complex subunit RuvA.